Consider the following 332-residue polypeptide: 2,3-diketo-L-gulonate reductase (332 aa).

His-44 functions as the Proton donor in the catalytic mechanism. NAD(+) contacts are provided by residues 168–174, 224–225, and 304–306; these read ITMVDMS, WK, and GHE.

Belongs to the LDH2/MDH2 oxidoreductase family. DlgD subfamily. Homodimer.

Its subcellular location is the cytoplasm. The enzyme catalyses 3-dehydro-L-gulonate + NAD(+) = 2,3-dioxo-L-gulonate + NADH + H(+). It catalyses the reaction 3-dehydro-L-gulonate + NADP(+) = 2,3-dioxo-L-gulonate + NADPH + H(+). Functionally, catalyzes the reduction of 2,3-diketo-L-gulonate in the presence of NADH, to form 3-keto-L-gulonate. The chain is 2,3-diketo-L-gulonate reductase from Salmonella typhimurium (strain LT2 / SGSC1412 / ATCC 700720).